The sequence spans 561 residues: MSDNRNSQVVTQGVQRAPNRAMLRAVGFGDDDFTKPIVGLANGFSTITPCNMGIDSLATRAEASIRTAGAMPQKFGTITISDGISMGTEGMKYSLVSREVIADSIETACMGQSMDGVLAIGGCDKNMPGAMLAMARMNIPAIFVYGGTIKPGHLNGEDLTVVSAFEAVGQHSAGRISEAELTAVEKHACPGAGSCGGMYTANTMSSAFEAMGMSLMYSSTMAAEDEEKAVSAEQSAAVLVEAIHKQILPRDILTRKAFENAIAVIMAVGGSTNAVLHLLAISRAAGDSLTLDDFETIRAQVPVICDLKPSGRYVATDLHKAGGIPLVMKMLLEHGLLHGDALTITGKTIAEQLADVPSEPSPDQDVIRPWDNPMYKQGHLAILRGNLATEGAVAKITGIKNPQITGPARVFESEEACLEAILAGKIQPNDVIVVRYEGPKGGPGMREMLAPTSAIIGAGLGDSVGLITDGRFSGGTYGMVVGHVAPEAAVGGTIALVQEGDQITIDAHARKLELHVSDQELKERKEKWEQPKPLYNKGVLAKYAKLVSSSSVGAVTDLDLF.

Cys50 provides a ligand contact to [2Fe-2S] cluster. Position 82 (Asp82) interacts with Mg(2+). Cys123 provides a ligand contact to [2Fe-2S] cluster. Residues Asp124 and Lys125 each coordinate Mg(2+). An N6-carboxylysine modification is found at Lys125. Cys195 serves as a coordination point for [2Fe-2S] cluster. Position 447 (Glu447) interacts with Mg(2+). Ser473 functions as the Proton acceptor in the catalytic mechanism.

The protein belongs to the IlvD/Edd family. In terms of assembly, homodimer. It depends on [2Fe-2S] cluster as a cofactor. Mg(2+) serves as cofactor.

The enzyme catalyses (2R)-2,3-dihydroxy-3-methylbutanoate = 3-methyl-2-oxobutanoate + H2O. It carries out the reaction (2R,3R)-2,3-dihydroxy-3-methylpentanoate = (S)-3-methyl-2-oxopentanoate + H2O. Its pathway is amino-acid biosynthesis; L-isoleucine biosynthesis; L-isoleucine from 2-oxobutanoate: step 3/4. It functions in the pathway amino-acid biosynthesis; L-valine biosynthesis; L-valine from pyruvate: step 3/4. Its function is as follows. Functions in the biosynthesis of branched-chain amino acids. Catalyzes the dehydration of (2R,3R)-2,3-dihydroxy-3-methylpentanoate (2,3-dihydroxy-3-methylvalerate) into 2-oxo-3-methylpentanoate (2-oxo-3-methylvalerate) and of (2R)-2,3-dihydroxy-3-methylbutanoate (2,3-dihydroxyisovalerate) into 2-oxo-3-methylbutanoate (2-oxoisovalerate), the penultimate precursor to L-isoleucine and L-valine, respectively. The chain is Dihydroxy-acid dehydratase from Acaryochloris marina (strain MBIC 11017).